An 831-amino-acid polypeptide reads, in one-letter code: Multiphosphoryl transfer protein (831 aa).

Residues 1 to 90 form the HPr domain; sequence MLTIQFLCPL…EYILVRFIDS (90 aa). H15 serves as the catalytic Pros-phosphohistidine intermediate; for HPr activity. Position 15 is a phosphohistidine; by EI (H15). Positions 119–650 are PTS EI; sequence GNVLASGVGV…AVKSQLRQLD (532 aa). H298 (tele-phosphohistidine intermediate; for PTS EI activity) is an active-site residue. A Phosphohistidine; by autocatalysis modification is found at H298. The phosphoenolpyruvate site is built by R405 and R441. Residues E540 and D564 each coordinate Mg(2+). Residues 563–564 and R574 each bind phosphoenolpyruvate; that span reads ND. The Proton donor; for EI activity role is filled by C611. A PTS EIIA type-2 domain is found at 685-828; it reads PLLALENIFV…QSILTLLETE (144 aa). The active-site Tele-phosphohistidine intermediate; for PTS EIIA activity is H747. The residue at position 747 (H747) is a Phosphohistidine; by HPr.

The protein belongs to the PEP-utilizing enzyme family. It depends on Mg(2+) as a cofactor.

It is found in the cytoplasm. The catalysed reaction is L-histidyl-[protein] + phosphoenolpyruvate = N(pros)-phospho-L-histidyl-[protein] + pyruvate. It catalyses the reaction D-fructose(out) + N(pros)-phospho-L-histidyl-[protein] = D-fructose 1-phosphate(in) + L-histidyl-[protein]. Functionally, multifunctional protein that includes general (non sugar-specific) and sugar-specific components of the phosphoenolpyruvate-dependent sugar phosphotransferase system (sugar PTS). This major carbohydrate active transport system catalyzes the phosphorylation of incoming sugar substrates concomitantly with their translocation across the cell membrane. The enzyme II FryABC PTS system is involved in fructose transport. The protein is Multiphosphoryl transfer protein (fryA) of Shigella flexneri.